The sequence spans 321 residues: Glucokinase (321 aa).

Residue 8-13 (GDVGGT) participates in ATP binding.

This sequence belongs to the bacterial glucokinase family.

Its subcellular location is the cytoplasm. It carries out the reaction D-glucose + ATP = D-glucose 6-phosphate + ADP + H(+). The polypeptide is Glucokinase (Escherichia coli (strain SMS-3-5 / SECEC)).